The sequence spans 2670 residues: Inositol 1,4,5-trisphosphate-gated calcium channel ITPR3 (2670 aa).

Residues 1-2201 are Cytoplasmic-facing; sequence MNEMSSFLHI…LIYWFSRRMT (2201 aa). MIR domains are found at residues 113 to 173, 174 to 224, 232 to 288, 295 to 372, and 378 to 434; these read GDVV…LRSN, GDNV…INLF, EEVL…VEVV, GGAG…LDPT, and DSFV…IVSV. Residues arginine 266, threonine 268, leucine 269, and arginine 270 each contribute to the 1D-myo-inositol 1,4,5-trisphosphate site. The tract at residues 321–344 is disordered; it reads PSYKGDVSDPKAAGPGAQSRTGRR. 1D-myo-inositol 1,4,5-trisphosphate contacts are provided by arginine 503, lysine 507, arginine 510, tyrosine 567, arginine 568, and lysine 569. Arginine 743 is a Ca(2+) binding site. Residues serine 916 and serine 934 each carry the phosphoserine modification. Residues glutamate 1122 and glutamate 1125 each coordinate Ca(2+). A compositionally biased stretch (basic and acidic residues) spans 1134–1153; sequence VKGEEGEAGASKDKKERPSD. Disordered stretches follow at residues 1134–1164 and 1807–1849; these read VKGE…HGEK and NMSD…GLHR. A phosphoserine mark is found at serine 1813, serine 1832, and serine 1834. Residues 1831 to 1842 show a composition bias toward low complexity; that stretch reads SSFSMPSSSRYS. The Ca(2+) site is built by glutamate 1881 and glutamate 1945. Residues alanine 1995, glutamate 2148, and lysine 2151 each contribute to the ATP site. A helical transmembrane segment spans residues 2202 to 2222; the sequence is LWGSISFNLAVFINIIIAFFY. Residues 2223 to 2233 lie on the Extracellular side of the membrane; that stretch reads PYVEGASTGVL. The helical transmembrane segment at 2234–2254 threads the bilayer; that stretch reads GSPLISLLFWILICFSIAALF. The Cytoplasmic portion of the chain corresponds to 2255–2263; that stretch reads TKHYSVRPL. A helical membrane pass occupies residues 2264 to 2284; sequence IVALVLRSIYYLGIGPTLNIL. At 2285-2324 the chain is on the extracellular side; the sequence is GALNLTNKIVFVVSFVGNRGTFIRGYKAMVMDMEFLYHVG. A helical membrane pass occupies residues 2325–2345; the sequence is YILTSVLGLFAHELFYSILLF. Topologically, residues 2346-2367 are cytoplasmic; it reads DLIYREETLFNVIKSVTRNGRS. The helical transmembrane segment at 2368–2388 threads the bilayer; the sequence is ILLTALLALILVYLFSIVGFL. The Extracellular portion of the chain corresponds to 2389–2495; sequence FLKDDFILEV…ESLFPARVVY (107 aa). Residues cysteine 2454 and cysteine 2460 are joined by a disulfide bond. The helical transmembrane segment at 2496 to 2516 threads the bilayer; it reads DLLFFFIVIIIVLNLIFGVII. Topologically, residues 2517-2670 are cytoplasmic; sequence DTFADLRSEK…FVDVQNCMSR (154 aa). Residues cysteine 2537 and phenylalanine 2538 each contribute to the ATP site. Cysteine 2537 serves as a coordination point for Zn(2+). Zn(2+) contacts are provided by cysteine 2540 and histidine 2557. Lysine 2559, histidine 2562, asparagine 2563, and methionine 2564 together coordinate ATP. A Zn(2+)-binding site is contributed by histidine 2562. Residue threonine 2580 coordinates Ca(2+). Phosphoserine occurs at positions 2608 and 2669.

The protein belongs to the InsP3 receptor family. Homotetramer. Homodimer. Interacts with TRPC1 and TRPC3. Interacts with TRPC4. Interacts with TRPV4. Interacts with SIGMAR1. Interacts with AKT1 and PML. Interacts with IRAG2 (via coiled-coil domain). Interacts with CABP1. Interacts with TMBIM4/LFG4. Interacts with CEMIP. Interacts with TESPA1. Interacts with TMEM203. Interacts with BOK; regulates ITPR3 expression. Interacts with BCL2L10. Interacts with CHGA and CHGB. In terms of processing, phosphorylated by AKT1 on serine and/or threonine residues.

Its subcellular location is the endoplasmic reticulum membrane. The protein resides in the cytoplasmic vesicle. The protein localises to the secretory vesicle membrane. It carries out the reaction Ca(2+)(in) = Ca(2+)(out). With respect to regulation, inositol 1,4,5-trisphosphate-gated calcium channel is regulated by cytosolic calcium in a biphasic manner. At low concentrations, cytosolic calcium binds at a high-affinity juxtamembrane domain (JD) calcium binding site, allowing ITPR3 to activate by escaping a low-energy resting state through an ensemble of preactivated states. At high cytosolic calcium concentrations, ITPR3 preferentially enters an inhibited state stabilized by calcium binding at a second, low-affinity cytoplasmic domain (CD) calcium binding site. Its function is as follows. Inositol 1,4,5-trisphosphate-gated calcium channel that, upon 1D-myo-inositol 1,4,5-trisphosphate binding, transports calcium from the endoplasmic reticulum lumen to cytoplasm, thus releasing the intracellular calcium and therefore participates in cellular calcium ion homeostasis. 11D-myo-inositol 1,4,5-trisphosphate binds to the ligand-free channel without altering its global conformation, yielding the low-energy resting state, then progresses through resting-to preactivated transitions to the higher energy preactivated state, which increases affinity for calcium, promoting binding of the low basal cytosolic calcium at the juxtamembrane domain (JD) site, favoring the transition through the ensemble of high-energy intermediate states along the trajectory to the fully-open activated state. Upon opening, releases calcium in the cytosol where it can bind to the low-affinity cytoplasmic domain (CD) site and stabilizes the inhibited state to terminate calcium release. The polypeptide is Inositol 1,4,5-trisphosphate-gated calcium channel ITPR3 (Rattus norvegicus (Rat)).